The following is a 255-amino-acid chain: 5'-nucleotidase SurE (255 aa).

D8, D9, S39, and N95 together coordinate a divalent metal cation.

It belongs to the SurE nucleotidase family. Requires a divalent metal cation as cofactor.

The protein localises to the cytoplasm. The catalysed reaction is a ribonucleoside 5'-phosphate + H2O = a ribonucleoside + phosphate. Nucleotidase that shows phosphatase activity on nucleoside 5'-monophosphates. The polypeptide is 5'-nucleotidase SurE (Thermosipho melanesiensis (strain DSM 12029 / CIP 104789 / BI429)).